The following is a 631-amino-acid chain: tRNA uridine 5-carboxymethylaminomethyl modification enzyme MnmG (631 aa).

Residue Gly-13 to Gly-18 coordinates FAD. Residue Gly-273–Phe-287 coordinates NAD(+).

This sequence belongs to the MnmG family. In terms of assembly, homodimer. Heterotetramer of two MnmE and two MnmG subunits. The cofactor is FAD.

It localises to the cytoplasm. In terms of biological role, NAD-binding protein involved in the addition of a carboxymethylaminomethyl (cmnm) group at the wobble position (U34) of certain tRNAs, forming tRNA-cmnm(5)s(2)U34. In Chromohalobacter salexigens (strain ATCC BAA-138 / DSM 3043 / CIP 106854 / NCIMB 13768 / 1H11), this protein is tRNA uridine 5-carboxymethylaminomethyl modification enzyme MnmG.